The sequence spans 70 residues: Large ribosomal subunit protein bL31 (70 aa).

The Zn(2+) site is built by Cys16, Cys18, Cys37, and Cys40. The tract at residues 48 to 70 is disordered; it reads QRQASSGGRVDKFNKRFGALGSK.

The protein belongs to the bacterial ribosomal protein bL31 family. Type A subfamily. Part of the 50S ribosomal subunit. Requires Zn(2+) as cofactor.

In terms of biological role, binds the 23S rRNA. In Photobacterium profundum (strain SS9), this protein is Large ribosomal subunit protein bL31.